Here is a 307-residue protein sequence, read N- to C-terminus: Serine/threonine-protein phosphatase 4 catalytic subunit (307 aa).

The residue at position 2 (Ala2) is an N-acetylalanine. Residues Asp54, His56, Asp82, and Asn114 each contribute to the Mn(2+) site. The active-site Proton donor is the His115. His164 and His238 together coordinate Mn(2+). A Leucine methyl ester modification is found at Leu307.

The protein belongs to the PPP phosphatase family. PP-4 (PP-X) subfamily. Serine/threonine-protein phosphatase 4 (PP4) occurs in different assemblies of the catalytic and one or more regulatory subunits. Component of the PP4 complexes PPP4C-PPP4R1, PPP4C-PPP4R2, PPP4C-PPP4R2-PPP4R3A, PPP4C-PPP4R2-PPP4R3B and PPP4C-PPP4R4. The PPP4C-PPP4R2 complex appears to be a tetramer composed of 2 molecules of PPP4C and 2 molecules of PPP4R2. Interacts with REL, NFKB1/p50 and RELA. Interacts with SMN1 and GEMIN4. Interacts with IRS4 (phosphorylated). Interacts with SMEK1/PPP4R3A; the interaction requires PP4R2. Interacts with HDAC3. Mn(2+) is required as a cofactor. In terms of processing, methylation at the C-terminal Leu-307 is critical for interactions with regulatory subunits and functions in DNA repair.

It localises to the cytoplasm. The protein resides in the nucleus. It is found in the cytoskeleton. Its subcellular location is the microtubule organizing center. The protein localises to the centrosome. The enzyme catalyses O-phospho-L-seryl-[protein] + H2O = L-seryl-[protein] + phosphate. The catalysed reaction is O-phospho-L-threonyl-[protein] + H2O = L-threonyl-[protein] + phosphate. Its function is as follows. Protein phosphatase that is involved in many processes such as microtubule organization at centrosomes, maturation of spliceosomal snRNPs, apoptosis, DNA repair, tumor necrosis factor (TNF)-alpha signaling, activation of c-Jun N-terminal kinase MAPK8, regulation of histone acetylation, DNA damage checkpoint signaling, NF-kappa-B activation and cell migration. The PPP4C-PPP4R1 PP4 complex may play a role in dephosphorylation and regulation of HDAC3. The PPP4C-PPP4R2-PPP4R3A PP4 complex specifically dephosphorylates H2AX phosphorylated on Ser-140 (gamma-H2AX) generated during DNA replication and required for DNA DSB repair. Dephosphorylates NDEL1 at CDK1 phosphorylation sites and negatively regulates CDK1 activity in interphase. In response to DNA damage, catalyzes RPA2 dephosphorylation, an essential step for DNA repair since it allows the efficient RPA2-mediated recruitment of RAD51 to chromatin. In Rattus norvegicus (Rat), this protein is Serine/threonine-protein phosphatase 4 catalytic subunit (Ppp4c).